The following is a 357-amino-acid chain: Protein-glutamate methylesterase/protein-glutamine glutaminase 1 (357 aa).

Residues 10 to 127 form the Response regulatory domain; it reads RTLIVDDSAF…DVNKIEKELV (118 aa). Aspartate 61 bears the 4-aspartylphosphate mark. The region spanning 159–353 is the CheB-type methylesterase domain; that stretch reads SCAGDFAVLI…EEIVRMSEVK (195 aa). Active-site residues include serine 171, histidine 198, and aspartate 295.

It belongs to the CheB family. In terms of processing, phosphorylated by CheA. Phosphorylation of the N-terminal regulatory domain activates the methylesterase activity.

Its subcellular location is the cytoplasm. It carries out the reaction [protein]-L-glutamate 5-O-methyl ester + H2O = L-glutamyl-[protein] + methanol + H(+). The enzyme catalyses L-glutaminyl-[protein] + H2O = L-glutamyl-[protein] + NH4(+). In terms of biological role, involved in chemotaxis. Part of a chemotaxis signal transduction system that modulates chemotaxis in response to various stimuli. Catalyzes the demethylation of specific methylglutamate residues introduced into the chemoreceptors (methyl-accepting chemotaxis proteins or MCP) by CheR. Also mediates the irreversible deamidation of specific glutamine residues to glutamic acid. The sequence is that of Protein-glutamate methylesterase/protein-glutamine glutaminase 1 from Methanosarcina mazei (strain ATCC BAA-159 / DSM 3647 / Goe1 / Go1 / JCM 11833 / OCM 88) (Methanosarcina frisia).